The sequence spans 599 residues: Aspartate--tRNA(Asp/Asn) ligase (599 aa).

E180 is a binding site for L-aspartate. The interval 204–207 is aspartate; that stretch reads QLLK. R226 is an L-aspartate binding site. ATP contacts are provided by residues 226 to 228 and Q235; that span reads RDE. Position 457 (H457) interacts with L-aspartate. E491 provides a ligand contact to ATP. R498 is a binding site for L-aspartate. 543-546 contributes to the ATP binding site; sequence GWDR. The interval 565-599 is disordered; the sequence is KAGGGRDPLTGAPAPISDEQRAETGVDYDPDADEN. Residues 590–599 show a composition bias toward acidic residues; sequence VDYDPDADEN.

This sequence belongs to the class-II aminoacyl-tRNA synthetase family. Type 1 subfamily. Homodimer.

The protein resides in the cytoplasm. The enzyme catalyses tRNA(Asx) + L-aspartate + ATP = L-aspartyl-tRNA(Asx) + AMP + diphosphate. Aspartyl-tRNA synthetase with relaxed tRNA specificity since it is able to aspartylate not only its cognate tRNA(Asp) but also tRNA(Asn). Reaction proceeds in two steps: L-aspartate is first activated by ATP to form Asp-AMP and then transferred to the acceptor end of tRNA(Asp/Asn). This is Aspartate--tRNA(Asp/Asn) ligase from Bifidobacterium longum (strain NCC 2705).